A 302-amino-acid chain; its full sequence is ATP synthase subunit b 1 (302 aa).

A helical membrane pass occupies residues 5–22 (WFTVIAQGINFLLLLWLL). The tract at residues 278–302 (GLPENEGTDNPEANPPHAEAKIPHA) is disordered.

Belongs to the ATPase B chain family. In terms of assembly, F-type ATPases have 2 components, F(1) - the catalytic core - and F(0) - the membrane proton channel. F(1) has five subunits: alpha(3), beta(3), gamma(1), delta(1), epsilon(1). F(0) has three main subunits: a(1), b(2) and c(10-14). The alpha and beta chains form an alternating ring which encloses part of the gamma chain. F(1) is attached to F(0) by a central stalk formed by the gamma and epsilon chains, while a peripheral stalk is formed by the delta and b chains.

Its subcellular location is the cell inner membrane. In terms of biological role, f(1)F(0) ATP synthase produces ATP from ADP in the presence of a proton or sodium gradient. F-type ATPases consist of two structural domains, F(1) containing the extramembraneous catalytic core and F(0) containing the membrane proton channel, linked together by a central stalk and a peripheral stalk. During catalysis, ATP synthesis in the catalytic domain of F(1) is coupled via a rotary mechanism of the central stalk subunits to proton translocation. Its function is as follows. Component of the F(0) channel, it forms part of the peripheral stalk, linking F(1) to F(0). The protein is ATP synthase subunit b 1 of Pseudoalteromonas atlantica (strain T6c / ATCC BAA-1087).